The chain runs to 239 residues: Ribonuclease HII (239 aa).

Residues 30–221 enclose the RNase H type-2 domain; the sequence is GPVAGVDEVG…VRRVANGSGG (192 aa). The a divalent metal cation site is built by Asp-36, Glu-37, and Asp-130.

It belongs to the RNase HII family. Mn(2+) serves as cofactor. Mg(2+) is required as a cofactor.

Its subcellular location is the cytoplasm. The enzyme catalyses Endonucleolytic cleavage to 5'-phosphomonoester.. Functionally, endonuclease that specifically degrades the RNA of RNA-DNA hybrids. The sequence is that of Ribonuclease HII from Mycolicibacterium paratuberculosis (strain ATCC BAA-968 / K-10) (Mycobacterium paratuberculosis).